A 217-amino-acid polypeptide reads, in one-letter code: Small ribosomal subunit protein uS3 (217 aa).

One can recognise a KH type-2 domain in the interval 38 to 106 (IRKFVQKELA…QVHINIIEIK (69 aa)).

The protein belongs to the universal ribosomal protein uS3 family. Part of the 30S ribosomal subunit. Forms a tight complex with proteins S10 and S14.

In terms of biological role, binds the lower part of the 30S subunit head. Binds mRNA in the 70S ribosome, positioning it for translation. In Streptococcus sanguinis (strain SK36), this protein is Small ribosomal subunit protein uS3.